A 139-amino-acid chain; its full sequence is Large ribosomal subunit protein uL13c (139 aa).

This sequence belongs to the universal ribosomal protein uL13 family. Part of the 50S ribosomal subunit.

Its subcellular location is the plastid. The protein resides in the chloroplast. This chain is Large ribosomal subunit protein uL13c, found in Trieres chinensis (Marine centric diatom).